The following is a 190-amino-acid chain: Elongation factor P-like protein (190 aa).

Belongs to the elongation factor P family.

The polypeptide is Elongation factor P-like protein (Shigella dysenteriae serotype 1 (strain Sd197)).